The chain runs to 156 residues: Ribosome-binding factor A (156 aa).

A disordered region spans residues 124 to 156 (TRAEYAGEAQPYRLEEEPEGSGDEVPPPGGDQR).

Belongs to the RbfA family. As to quaternary structure, monomer. Binds 30S ribosomal subunits, but not 50S ribosomal subunits or 70S ribosomes.

The protein resides in the cytoplasm. One of several proteins that assist in the late maturation steps of the functional core of the 30S ribosomal subunit. Associates with free 30S ribosomal subunits (but not with 30S subunits that are part of 70S ribosomes or polysomes). Required for efficient processing of 16S rRNA. May interact with the 5'-terminal helix region of 16S rRNA. The sequence is that of Ribosome-binding factor A from Salinispora tropica (strain ATCC BAA-916 / DSM 44818 / JCM 13857 / NBRC 105044 / CNB-440).